Here is a 119-residue protein sequence, read N- to C-terminus: MTKEQIIEAVKSMTVLELNDLVKAIEEEFGVTAAAPVAVVGGAGEAAAEKTEFDVELANAGAQKIKVIKVVREITGLGLKEAKELVDNTPKVIKEGASKEEAEEIKAKLEEVGAAVEVK.

The protein belongs to the bacterial ribosomal protein bL12 family. As to quaternary structure, homodimer. Part of the ribosomal stalk of the 50S ribosomal subunit. Forms a multimeric L10(L12)X complex, where L10 forms an elongated spine to which 2 to 4 L12 dimers bind in a sequential fashion. Binds GTP-bound translation factors.

Forms part of the ribosomal stalk which helps the ribosome interact with GTP-bound translation factors. Is thus essential for accurate translation. The chain is Large ribosomal subunit protein bL12 from Bacillus cytotoxicus (strain DSM 22905 / CIP 110041 / 391-98 / NVH 391-98).